A 145-amino-acid chain; its full sequence is Large ribosomal subunit protein uL14m (145 aa).

Residues 1 to 30 constitute a mitochondrion transit peptide; the sequence is MAALTGLWGSFAHVSRAFSQRCFSTSGSLS.

This sequence belongs to the universal ribosomal protein uL14 family. Component of the mitochondrial ribosome large subunit (39S) which comprises a 16S rRNA and about 50 distinct proteins. Interacts with MALSU1.

Its subcellular location is the mitochondrion. Its function is as follows. May form part of 2 intersubunit bridges in the assembled ribosome. Upon binding to MALSU1, intersubunit bridge formation is blocked, preventing ribosome formation and repressing translation. The sequence is that of Large ribosomal subunit protein uL14m (Mrpl14) from Mus musculus (Mouse).